Consider the following 431-residue polypeptide: Transposase for insertion sequence element IS232 (431 aa).

In terms of domain architecture, HTH IS21-type spans 20–79 (PNFKKLMGNLKMKINKSQLARELNVDRRTIDKYLNGFTPKGTKNKTSKIDTYYEVIAALL). Positions 35-54 (KSQLARELNVDRRTIDKYLN) form a DNA-binding region, H-T-H motif. The 176-residue stretch at 140–315 (YETPPGEQAQ…IPVFALKQEK (176 aa)) folds into the Integrase catalytic domain.

Belongs to the transposase IS21/IS408/IS1162 family.

In terms of biological role, involved in the transposition of the insertion sequence. This is Transposase for insertion sequence element IS232 from Bacillus thuringiensis subsp. berliner.